The primary structure comprises 442 residues: 5-methylthioadenosine/S-adenosylhomocysteine deaminase (442 aa).

Zn(2+) is bound by residues His-70 and His-72. Glu-99 and His-191 together coordinate substrate. His-218 serves as a coordination point for Zn(2+). Substrate-binding residues include Glu-221 and Asp-306. Asp-306 contacts Zn(2+).

It belongs to the metallo-dependent hydrolases superfamily. MTA/SAH deaminase family. The cofactor is Zn(2+).

It catalyses the reaction S-adenosyl-L-homocysteine + H2O + H(+) = S-inosyl-L-homocysteine + NH4(+). The catalysed reaction is S-methyl-5'-thioadenosine + H2O + H(+) = S-methyl-5'-thioinosine + NH4(+). Functionally, catalyzes the deamination of 5-methylthioadenosine and S-adenosyl-L-homocysteine into 5-methylthioinosine and S-inosyl-L-homocysteine, respectively. Is also able to deaminate adenosine. The chain is 5-methylthioadenosine/S-adenosylhomocysteine deaminase from Nitratidesulfovibrio vulgaris (strain ATCC 29579 / DSM 644 / CCUG 34227 / NCIMB 8303 / VKM B-1760 / Hildenborough) (Desulfovibrio vulgaris).